The following is a 525-amino-acid chain: GMP synthase [glutamine-hydrolyzing] (525 aa).

A Glutamine amidotransferase type-1 domain is found at 9 to 207; it reads KILILDFGSQ…IVDICGCDTL (199 aa). The active-site Nucleophile is the cysteine 86. Residues histidine 181 and glutamate 183 contribute to the active site. The 193-residue stretch at 208–400 folds into the GMPS ATP-PPase domain; that stretch reads WTPANIAQDA…LGLPYDMVYR (193 aa). 235–241 lines the ATP pocket; sequence SGGVDSS.

As to quaternary structure, homodimer.

The enzyme catalyses XMP + L-glutamine + ATP + H2O = GMP + L-glutamate + AMP + diphosphate + 2 H(+). It functions in the pathway purine metabolism; GMP biosynthesis; GMP from XMP (L-Gln route): step 1/1. In terms of biological role, catalyzes the synthesis of GMP from XMP. The chain is GMP synthase [glutamine-hydrolyzing] from Marinomonas sp. (strain MWYL1).